We begin with the raw amino-acid sequence, 208 residues long: Putative 3-methyladenine DNA glycosylase (208 aa).

Belongs to the DNA glycosylase MPG family.

This chain is Putative 3-methyladenine DNA glycosylase, found in Prosthecochloris aestuarii (strain DSM 271 / SK 413).